A 638-amino-acid polypeptide reads, in one-letter code: Chaperone protein DnaK (638 aa).

Residue threonine 198 is modified to Phosphothreonine; by autocatalysis. A disordered region spans residues 598–638 (YEASQKEAAEADAKADAAKDSDVVDADFEEIDEDDDKKKSA). Residues 601-619 (SQKEAAEADAKADAAKDSD) are compositionally biased toward basic and acidic residues. Residues 620 to 632 (VVDADFEEIDEDD) show a composition bias toward acidic residues.

It belongs to the heat shock protein 70 family.

Its function is as follows. Acts as a chaperone. This Mesorhizobium japonicum (strain LMG 29417 / CECT 9101 / MAFF 303099) (Mesorhizobium loti (strain MAFF 303099)) protein is Chaperone protein DnaK.